The sequence spans 424 residues: Enolase (424 aa).

Gln162 contributes to the (2R)-2-phosphoglycerate binding site. Residue Glu204 is the Proton donor of the active site. Residues Asp241, Glu284, and Asp311 each contribute to the Mg(2+) site. The (2R)-2-phosphoglycerate site is built by Lys336, Arg365, Ser366, and Lys387. Lys336 (proton acceptor) is an active-site residue.

Belongs to the enolase family. It depends on Mg(2+) as a cofactor.

It localises to the cytoplasm. The protein resides in the secreted. It is found in the cell surface. The catalysed reaction is (2R)-2-phosphoglycerate = phosphoenolpyruvate + H2O. It participates in carbohydrate degradation; glycolysis; pyruvate from D-glyceraldehyde 3-phosphate: step 4/5. Its function is as follows. Catalyzes the reversible conversion of 2-phosphoglycerate (2-PG) into phosphoenolpyruvate (PEP). It is essential for the degradation of carbohydrates via glycolysis. This chain is Enolase, found in Rhizobium johnstonii (strain DSM 114642 / LMG 32736 / 3841) (Rhizobium leguminosarum bv. viciae).